The sequence spans 932 residues: Glycine dehydrogenase (decarboxylating) (932 aa).

Lys-685 is subject to N6-(pyridoxal phosphate)lysine.

The protein belongs to the GcvP family. As to quaternary structure, the glycine cleavage system is composed of four proteins: P, T, L and H. The cofactor is pyridoxal 5'-phosphate.

It carries out the reaction N(6)-[(R)-lipoyl]-L-lysyl-[glycine-cleavage complex H protein] + glycine + H(+) = N(6)-[(R)-S(8)-aminomethyldihydrolipoyl]-L-lysyl-[glycine-cleavage complex H protein] + CO2. In terms of biological role, the glycine cleavage system catalyzes the degradation of glycine. The P protein binds the alpha-amino group of glycine through its pyridoxal phosphate cofactor; CO(2) is released and the remaining methylamine moiety is then transferred to the lipoamide cofactor of the H protein. This chain is Glycine dehydrogenase (decarboxylating), found in Brucella suis (strain ATCC 23445 / NCTC 10510).